We begin with the raw amino-acid sequence, 249 residues long: ATP synthase subunit a (249 aa).

6 helical membrane passes run phenylalanine 26–leucine 46, phenylalanine 84–phenylalanine 104, isoleucine 114–tryptophan 134, leucine 143–isoleucine 163, isoleucine 185–alanine 205, and alanine 208–leucine 228.

Belongs to the ATPase A chain family. F-type ATPases have 2 components, CF(1) - the catalytic core - and CF(0) - the membrane proton channel. CF(1) has five subunits: alpha(3), beta(3), gamma(1), delta(1), epsilon(1). CF(0) has three main subunits: a(1), b(2) and c(9-12). The alpha and beta chains form an alternating ring which encloses part of the gamma chain. CF(1) is attached to CF(0) by a central stalk formed by the gamma and epsilon chains, while a peripheral stalk is formed by the delta and b chains.

It localises to the cell inner membrane. In terms of biological role, key component of the proton channel; it plays a direct role in the translocation of protons across the membrane. This chain is ATP synthase subunit a, found in Chelativorans sp. (strain BNC1).